The chain runs to 254 residues: Adenosylcobinamide-GDP ribazoletransferase (254 aa).

The next 7 helical transmembrane spans lie at serine 27 to alanine 47, glycine 50 to leucine 70, valine 104 to leucine 124, alanine 131 to alanine 151, alanine 170 to leucine 190, valine 194 to leucine 214, and leucine 233 to isoleucine 253.

This sequence belongs to the CobS family. It depends on Mg(2+) as a cofactor.

It localises to the cell inner membrane. It carries out the reaction alpha-ribazole + adenosylcob(III)inamide-GDP = adenosylcob(III)alamin + GMP + H(+). It catalyses the reaction alpha-ribazole 5'-phosphate + adenosylcob(III)inamide-GDP = adenosylcob(III)alamin 5'-phosphate + GMP + H(+). It participates in cofactor biosynthesis; adenosylcobalamin biosynthesis; adenosylcobalamin from cob(II)yrinate a,c-diamide: step 7/7. Joins adenosylcobinamide-GDP and alpha-ribazole to generate adenosylcobalamin (Ado-cobalamin). Also synthesizes adenosylcobalamin 5'-phosphate from adenosylcobinamide-GDP and alpha-ribazole 5'-phosphate. The chain is Adenosylcobinamide-GDP ribazoletransferase from Chlorobaculum parvum (strain DSM 263 / NCIMB 8327) (Chlorobium vibrioforme subsp. thiosulfatophilum).